Reading from the N-terminus, the 298-residue chain is 3-sulfolactaldehyde reductase (298 aa).

Residues 11–12 (QM), D31, L65, and T96 each bind NAD(+). R123 lines the 2,3-dihydroxypropane-1-sulfonate pocket. K171 is an active-site residue. 174–178 (NNYMS) is a 2,3-dihydroxypropane-1-sulfonate binding site. K240 serves as a coordination point for NAD(+).

Belongs to the HIBADH-related family. 3-sulfolactaldehyde reductase subfamily. Homotetramer. Dimer of dimers.

It carries out the reaction (2S)-3-sulfopropanediol + NAD(+) = (2S)-3-sulfolactaldehyde + NADH + H(+). The catalysed reaction is 4-hydroxybutanoate + NAD(+) = succinate semialdehyde + NADH + H(+). With respect to regulation, inhibited by the NADH analogs tetrahydro-NADH and hexahydro-NADH. In terms of biological role, reduces 3-sulfolactaldehyde (SLA) to 2,3-dihydroxypropane 1-sulfonate (DHPS). Metabolite profiling studies showed that the enzyme also catalyzes in vitro the NADH-dependent reduction of succinic semialdehyde (SSA) to 4-hydroxybutyrate (GHB), and that it could be involved in the metabolism of SSA, and other potentially toxic intermediates that may accumulate under stress conditions. However, the enzyme exhibits a 42,000-fold greater catalytic efficiency for the reduction of SLA over SSA. Shows no detectable activity on the analogous glycolytic intermediate glyceraldehyde-3-phosphate. The protein is 3-sulfolactaldehyde reductase (yihU) of Escherichia coli (strain K12).